The sequence spans 227 residues: Octanoyltransferase (227 aa).

The 177-residue stretch at 47–223 (EDTADEIWLL…HLLRLLPPGV (177 aa)) folds into the BPL/LPL catalytic domain. Substrate contacts are provided by residues 87-94 (RGGQITYH), 154-156 (ALG), and 167-169 (GLA). C185 (acyl-thioester intermediate) is an active-site residue.

It belongs to the LipB family.

Its subcellular location is the cytoplasm. It carries out the reaction octanoyl-[ACP] + L-lysyl-[protein] = N(6)-octanoyl-L-lysyl-[protein] + holo-[ACP] + H(+). The protein operates within protein modification; protein lipoylation via endogenous pathway; protein N(6)-(lipoyl)lysine from octanoyl-[acyl-carrier-protein]: step 1/2. Its function is as follows. Catalyzes the transfer of endogenously produced octanoic acid from octanoyl-acyl-carrier-protein onto the lipoyl domains of lipoate-dependent enzymes. Lipoyl-ACP can also act as a substrate although octanoyl-ACP is likely to be the physiological substrate. This is Octanoyltransferase from Azoarcus sp. (strain BH72).